We begin with the raw amino-acid sequence, 147 residues long: Protein MGF 100-3L (147 aa).

The protein belongs to the asfivirus MGF 100 family.

Plays a role in virus cell tropism, and may be required for efficient virus replication in macrophages. This African swine fever virus (isolate Tick/Malawi/Lil 20-1/1983) (ASFV) protein is Protein MGF 100-3L.